The sequence spans 267 residues: Methylglyoxal reductase DkgB (267 aa).

The Proton donor role is filled by Tyr39. His97 contacts substrate. NADP(+) is bound at residue 179–231 (MTLAYGKALAEPVIKTIAEQHGATPAQVILSWAMQLGYGVIPSSTKAANLASN).

Belongs to the aldo/keto reductase family. Monomer.

Its subcellular location is the cytoplasm. It catalyses the reaction hydroxyacetone + NADP(+) = methylglyoxal + NADPH + H(+). In terms of biological role, aldo-keto reductase that significantly contributes to cellular methylglyoxal detoxification by catalyzing the NADPH-dependent conversion of methylglyoxal to acetol. The chain is Methylglyoxal reductase DkgB from Yersinia pestis.